Reading from the N-terminus, the 447-residue chain is NADH-ubiquinone oxidoreductase chain 4 (447 aa).

The next 13 helical transmembrane spans lie at 4–24 (LLLL…FMLF), 34–54 (LIIG…LNWI), 67–87 (MYSY…FISL), 100–120 (LLMI…FYLF), 149–169 (MFYT…IYLI), 189–209 (LFIY…FHGW), 223–243 (MILA…LMII), 248–268 (FILI…ILSL), 279–299 (IIAI…MTFL), 304–324 (IGGY…FFLV), 349–371 (MSLL…NLIS), 388–408 (LILM…FMFI), and 422–442 (GILV…LMFL).

This sequence belongs to the complex I subunit 4 family.

It localises to the mitochondrion membrane. It carries out the reaction a ubiquinone + NADH + 5 H(+)(in) = a ubiquinol + NAD(+) + 4 H(+)(out). Core subunit of the mitochondrial membrane respiratory chain NADH dehydrogenase (Complex I) that is believed to belong to the minimal assembly required for catalysis. Complex I functions in the transfer of electrons from NADH to the respiratory chain. The immediate electron acceptor for the enzyme is believed to be ubiquinone. This Apis mellifera ligustica (Common honeybee) protein is NADH-ubiquinone oxidoreductase chain 4 (ND4).